The sequence spans 1831 residues: Transmembrane protein 131 homolog (1831 aa).

An N-terminal signal peptide occupies residues 1 to 29; it reads MVPSIHKTSNRYRTIYFFLISLLITSTFA. Residues 30 to 1169 are Lumenal-facing; that stretch reads DQQAWPLPEE…QALPRPPFEN (1140 aa). A papD-L domain region spans residues 118–294; that stretch reads EMDPPMMDFG…QSKQIATLVL (177 aa). The helical transmembrane segment at 1170–1190 threads the bilayer; that stretch reads IMYYSCVTALIFCLVCVLACA. The Cytoplasmic portion of the chain corresponds to 1191 to 1831; the sequence is YLEGDRAIAV…TDNENDEKNN (641 aa). The segment covering 1223 to 1234 has biased composition (low complexity); that stretch reads STTTPVPTVPST. Disordered stretches follow at residues 1223–1252, 1325–1516, 1663–1759, and 1800–1831; these read STTTPVPTVPSTAKPESSIKKPTPATRPST, GQQK…PTDD, QMKR…VSNP, and WSSSSLFHPPTQQPSTSQMPQDTDNENDEKNN. Positions 1338-1349 are enriched in acidic residues; sequence PEFDEVEEEELA. Low complexity-rich tracts occupy residues 1394-1407 and 1435-1448; these read PIIVQPVVQSPPVQ and QVPPVTKTPVTPKT. Residues 1455-1467 are compositionally biased toward basic and acidic residues; that stretch reads EPEKPIKPSEQKK. A compositionally biased stretch (polar residues) spans 1480–1497; sequence TPSKARTPSKTPSQSNRA. Residues 1500–1514 show a composition bias toward low complexity; it reads PASSPAPIAPTSAPT. Polar residues-rich tracts occupy residues 1669–1687, 1702–1733, and 1742–1758; these read SPSQASSTLSRKLENSPQK, NQSSSSALNPNYDFTRTPGNPNRMQMSQNSIQ, and WGDNSNSDPWGTNTVSN. The segment covering 1808–1820 has biased composition (low complexity); it reads PPTQQPSTSQMPQ. Residues 1822–1831 are compositionally biased toward acidic residues; that stretch reads TDNENDEKNN.

This sequence belongs to the TMEM131 family. May interact (via PapD-L domain) with collagen proteins (via C-terminus); the interaction is direct and is involved in assembly and secretion of collagen. As to expression, predominantly expressed in the intestine and hypodermis.

It is found in the membrane. The protein localises to the endoplasmic reticulum membrane. Collagen binding transmembrane protein involved in collagen secretion, probably by recruiting the ER-to-Golgi transport complex TRAPPIII. Required for normal development. The chain is Transmembrane protein 131 homolog from Caenorhabditis elegans.